Reading from the N-terminus, the 187-residue chain is UPF0301 protein YqgE (187 aa).

This sequence belongs to the UPF0301 (AlgH) family.

The polypeptide is UPF0301 protein YqgE (Escherichia fergusonii (strain ATCC 35469 / DSM 13698 / CCUG 18766 / IAM 14443 / JCM 21226 / LMG 7866 / NBRC 102419 / NCTC 12128 / CDC 0568-73)).